A 396-amino-acid polypeptide reads, in one-letter code: Enoyl-[acyl-carrier-protein] reductase [NADH] (396 aa).

NAD(+)-binding positions include 48-53 (GASTGY), 74-75 (FE), 111-112 (DA), and 139-140 (LA). A substrate-binding site is contributed by Tyr225. Tyr235 (proton donor) is an active-site residue. NAD(+) contacts are provided by residues Lys244 and 273-275 (VVT).

It belongs to the TER reductase family. In terms of assembly, monomer.

The catalysed reaction is a 2,3-saturated acyl-[ACP] + NAD(+) = a (2E)-enoyl-[ACP] + NADH + H(+). It participates in lipid metabolism; fatty acid biosynthesis. In terms of biological role, involved in the final reduction of the elongation cycle of fatty acid synthesis (FAS II). Catalyzes the reduction of a carbon-carbon double bond in an enoyl moiety that is covalently linked to an acyl carrier protein (ACP). This Teredinibacter turnerae (strain ATCC 39867 / T7901) protein is Enoyl-[acyl-carrier-protein] reductase [NADH].